A 241-amino-acid chain; its full sequence is Ribonuclease PH (241 aa).

Residues Arg87 and 125–127 each bind phosphate; that span reads GTR.

Belongs to the RNase PH family. Homohexameric ring arranged as a trimer of dimers.

It carries out the reaction tRNA(n+1) + phosphate = tRNA(n) + a ribonucleoside 5'-diphosphate. In terms of biological role, phosphorolytic 3'-5' exoribonuclease that plays an important role in tRNA 3'-end maturation. Removes nucleotide residues following the 3'-CCA terminus of tRNAs; can also add nucleotides to the ends of RNA molecules by using nucleoside diphosphates as substrates, but this may not be physiologically important. Probably plays a role in initiation of 16S rRNA degradation (leading to ribosome degradation) during starvation. This chain is Ribonuclease PH, found in Dehalococcoides mccartyi (strain ATCC BAA-2100 / JCM 16839 / KCTC 5957 / BAV1).